The chain runs to 265 residues: Oxygen-evolving enhancer protein 2-2, chloroplastic (265 aa).

A chloroplast-targeting transit peptide spans Met-1–Ala-79.

This sequence belongs to the PsbP family.

Its subcellular location is the plastid. The protein localises to the chloroplast thylakoid membrane. In terms of biological role, may be involved in the regulation of photosystem II. This is Oxygen-evolving enhancer protein 2-2, chloroplastic (PSBP2) from Nicotiana tabacum (Common tobacco).